A 101-amino-acid chain; its full sequence is Small ribosomal subunit protein uS14 (101 aa).

Belongs to the universal ribosomal protein uS14 family. As to quaternary structure, part of the 30S ribosomal subunit. Contacts proteins S3 and S10.

Functionally, binds 16S rRNA, required for the assembly of 30S particles and may also be responsible for determining the conformation of the 16S rRNA at the A site. In Acinetobacter baylyi (strain ATCC 33305 / BD413 / ADP1), this protein is Small ribosomal subunit protein uS14.